Reading from the N-terminus, the 288-residue chain is Polyamine aminopropyltransferase (288 aa).

The PABS domain occupies 11–245 (IEWYPRGYGV…SPWSFLVGVK (235 aa)). Glutamine 36 provides a ligand contact to S-methyl-5'-thioadenosine. Spermidine contacts are provided by histidine 67 and aspartate 91. S-methyl-5'-thioadenosine contacts are provided by residues glutamate 111 and 148–149 (DG). The Proton acceptor role is filled by aspartate 166. 166-169 (DSTD) contributes to the spermidine binding site. Proline 173 contacts S-methyl-5'-thioadenosine.

It belongs to the spermidine/spermine synthase family. As to quaternary structure, homodimer or homotetramer.

The protein resides in the cytoplasm. The catalysed reaction is S-adenosyl 3-(methylsulfanyl)propylamine + agmatine = N(1)-(3-aminopropyl)agmatine + S-methyl-5'-thioadenosine + H(+). The enzyme catalyses S-adenosyl 3-(methylsulfanyl)propylamine + putrescine = S-methyl-5'-thioadenosine + spermidine + H(+). It carries out the reaction cadaverine + S-adenosyl 3-(methylsulfanyl)propylamine = aminopropylcadaverine + S-methyl-5'-thioadenosine + H(+). The protein operates within amine and polyamine biosynthesis; spermidine biosynthesis; spermidine from putrescine: step 1/1. Functionally, involved in the biosynthesis of polyamines which are thought to support the growth of thermophilic microorganisms under high-temperature conditions. It seems that long-chain and branched-chain of polyamines effectively stabilize DNA and RNA, respectively. Catalyzes the irreversible transfer of a propylamine group from the amino donor S-adenosylmethioninamine (decarboxy-AdoMet) to agmatine to yield N1-aminopropylagmatine. It can also use cadaverine (1,5-diaminopentane) and putrescine (1,4-diaminobutane) as substrate with a lower activity than that of agmatine. The reaction involves a nucleophilic attack on the C-3 methylene of the propylamine moiety adjacent to the positively charged sulfur of decarboxy-AdoMet. The protein is Polyamine aminopropyltransferase of Thermococcus kodakarensis (strain ATCC BAA-918 / JCM 12380 / KOD1) (Pyrococcus kodakaraensis (strain KOD1)).